A 225-amino-acid chain; its full sequence is Uracil-DNA glycosylase (225 aa).

Catalysis depends on aspartate 65, which acts as the Proton acceptor.

The protein belongs to the uracil-DNA glycosylase (UDG) superfamily. UNG family.

It localises to the cytoplasm. The catalysed reaction is Hydrolyzes single-stranded DNA or mismatched double-stranded DNA and polynucleotides, releasing free uracil.. Excises uracil residues from the DNA which can arise as a result of misincorporation of dUMP residues by DNA polymerase or due to deamination of cytosine. The polypeptide is Uracil-DNA glycosylase (Clostridium perfringens (strain ATCC 13124 / DSM 756 / JCM 1290 / NCIMB 6125 / NCTC 8237 / Type A)).